The sequence spans 203 residues: Outer-membrane lipoprotein LolB (203 aa).

The signal sequence occupies residues 1-18 (MTLRSFLIFFLSSLILAG). C19 is lipidated: N-palmitoyl cysteine. C19 carries S-diacylglycerol cysteine lipidation.

This sequence belongs to the LolB family. In terms of assembly, monomer.

The protein resides in the cell outer membrane. Plays a critical role in the incorporation of lipoproteins in the outer membrane after they are released by the LolA protein. This chain is Outer-membrane lipoprotein LolB, found in Vibrio parahaemolyticus serotype O3:K6 (strain RIMD 2210633).